Consider the following 239-residue polypeptide: 1-(5-phosphoribosyl)-5-[(5-phosphoribosylamino)methylideneamino] imidazole-4-carboxamide isomerase (239 aa).

Aspartate 8 serves as the catalytic Proton acceptor. Aspartate 129 (proton donor) is an active-site residue.

The protein belongs to the HisA/HisF family.

It localises to the cytoplasm. The enzyme catalyses 1-(5-phospho-beta-D-ribosyl)-5-[(5-phospho-beta-D-ribosylamino)methylideneamino]imidazole-4-carboxamide = 5-[(5-phospho-1-deoxy-D-ribulos-1-ylimino)methylamino]-1-(5-phospho-beta-D-ribosyl)imidazole-4-carboxamide. Its pathway is amino-acid biosynthesis; L-histidine biosynthesis; L-histidine from 5-phospho-alpha-D-ribose 1-diphosphate: step 4/9. In Cereibacter sphaeroides (strain ATCC 17029 / ATH 2.4.9) (Rhodobacter sphaeroides), this protein is 1-(5-phosphoribosyl)-5-[(5-phosphoribosylamino)methylideneamino] imidazole-4-carboxamide isomerase.